The chain runs to 913 residues: Trafficking kinesin-binding protein 2 (913 aa).

The segment covering 11–21 has biased composition (polar residues); it reads SQTGEENLMSS. The tract at residues 11 to 31 is disordered; it reads SQTGEENLMSSNHRDSESITD. Positions 48-353 constitute an HAP1 N-terminal domain; sequence EEQLPQYKLR…QEEIKELRNK (306 aa). The stretch at 134–355 forms a coiled coil; the sequence is QALLKRNHVL…EIKELRNKAG (222 aa). Positions 359-507 are interaction with HGS; it reads HLCFSQAYGV…KQFFAEEWER (149 aa). The interval 442-478 is disordered; sequence ESGVQQTEDKTLPNQGSSTEVPGNSHPRDPPGLPEDS. Positions 453-463 are enriched in polar residues; that stretch reads LPNQGSSTEVP. Residues 502-519 adopt a coiled-coil conformation; sequence AEEWERKLQILAEQEEEV. Composition is skewed to low complexity over residues 688-704 and 780-789; these read SSGF…GSAS and PSQSPCSSPV. Disordered regions lie at residues 688–707 and 769–790; these read SSGF…SNTA and ALAT…SPVP.

The protein belongs to the milton family. Interacts with RHOT1/Miro-1 and RHOT2/Miro-2. Interacts with GABA-A receptor and O-GlcNAc transferase. Interacts with HGS. In terms of processing, O-glycosylated. Present in heart and brain (at protein level).

It localises to the cytoplasm. It is found in the early endosome. The protein localises to the mitochondrion. May regulate endosome-to-lysosome trafficking of membrane cargo, including EGFR. The chain is Trafficking kinesin-binding protein 2 (Trak2) from Rattus norvegicus (Rat).